The following is a 419-amino-acid chain: Divinyl chlorophyllide a 8-vinyl-reductase, chloroplastic (419 aa).

The transit peptide at 1 to 71 directs the protein to the chloroplast; the sequence is MSICSTVGAG…PIVVSSTPVV (71 aa).

The protein resides in the plastid. It localises to the chloroplast. It carries out the reaction protochlorophyllide a + NADP(+) = 3,8-divinyl protochlorophyllide a + NADPH + H(+). The protein operates within porphyrin-containing compound metabolism; chlorophyll biosynthesis. In terms of biological role, catalyzes the conversion of divinyl chlorophyllide to monovinyl chlorophyllide. Reduces the 8-vinyl group of the tetrapyrrole to an ethyl group using NADPH as the reductant. The best substrate is (3,8-divinyl)-chlorophyllide a (DV-Chlidea). Very low activity with (3,8-divinyl)-protochlorophyllide a (DV-Pchlidea) and (3,8-divinyl)-magnesium-protoporphyrin IX monomethyl ester (DV-MPE). No activity with (3,8-divinyl)-magnesium-protoporphyrin IX (DV-Mg-Proto) and (3,8-divinyl)-chlorophyll a (DV-Chla). This is Divinyl chlorophyllide a 8-vinyl-reductase, chloroplastic (DVR) from Cucumis sativus (Cucumber).